A 534-amino-acid chain; its full sequence is MRLRGRGPRAAPSSSSGAGDARRLAPPGRNPFVHELRLSALQKAQVAFMTLTLFPIRLLFAAFMMLLAWPFALVASLGPPDKEPEQPLALWRKVVDFLLKAIMRTMWFAGGFHRVAVKGRQALPTEAAILTLAPHSSYFDAIPVTMTMSSIVMKAESRDIPIWGTLIRYIRPVFVSRSDQDSRRKTVEEIKRRAQSNGKWPQIMIFPEGTCTNRTCLITFKPGAFIPGVPVQPVVLRYPNKLDTITWTWQGPGALKILWLTLCQFQNQVEIEFLPVYCPSEEEKRNPALYASNVRRVMAKALGVSVTDYTFEDCQLALAEGQLRLPADTCLLEFARLVRGLGLKPENLEKDLDKYSESARMKRGEKIRLPEFAAYLEVPVSDALEDMFSLFDESGGGEIDLREYVVALSVVCRPSQTLATIQLAFKMYGSPEDGSIDEADLSCILKTALGISELTVTDLFQAIDQEERGRITFDDFCGFAEMYPDFAEDYLYPDQTHSDSCAQTPPAPTPNGFCIDFSPEHSDFGRKNSCKKVD.

Residues 1 to 25 (MRLRGRGPRAAPSSSSGAGDARRLA) are disordered. Residues 1 to 57 (MRLRGRGPRAAPSSSSGAGDARRLAPPGRNPFVHELRLSALQKAQVAFMTLTLFPIR) are Cytoplasmic-facing. A compositionally biased stretch (low complexity) spans 8–19 (PRAAPSSSSGAG). A helical; Signal-anchor for type II membrane protein transmembrane segment spans residues 58–78 (LLFAAFMMLLAWPFALVASLG). Residues 79-534 (PPDKEPEQPL…GRKNSCKKVD (456 aa)) lie on the Lumenal side of the membrane. The short motif at 135–140 (HSSYFD) is the HXXXXD motif element. EF-hand domains follow at residues 379 to 414 (PVSDALEDMFSLFDESGGGEIDLREYVVALSVVCRP) and 451 to 486 (ISELTVTDLFQAIDQEERGRITFDDFCGFAEMYPDF). Asp392, Ser394, Glu398, and Glu403 together coordinate Ca(2+). The Di-lysine motif signature appears at 531–534 (KKVD).

It belongs to the 1-acyl-sn-glycerol-3-phosphate acyltransferase family. In terms of tissue distribution, enriched in alveolar type II cells of lung. Also highly expressed in stomach.

It is found in the endoplasmic reticulum membrane. It localises to the golgi apparatus membrane. The protein localises to the cell membrane. Its subcellular location is the lipid droplet. It carries out the reaction a 1-acyl-sn-glycero-3-phosphocholine + an acyl-CoA = a 1,2-diacyl-sn-glycero-3-phosphocholine + CoA. The enzyme catalyses a 1-O-alkyl-sn-glycero-3-phosphocholine + acetyl-CoA = a 1-O-alkyl-2-acetyl-sn-glycero-3-phosphocholine + CoA. It catalyses the reaction a 1-acyl-sn-glycero-3-phosphate + an acyl-CoA = a 1,2-diacyl-sn-glycero-3-phosphate + CoA. The catalysed reaction is a 1-O-(1Z-alkenyl)-sn-glycero-3-phosphocholine + an acyl-CoA = a 1-O-(1Z-alkenyl)-2-acyl-sn-glycero-3-phosphocholine + CoA. It carries out the reaction 1-acyl-sn-glycero-3-phospho-(1'-sn-glycerol) + an acyl-CoA = a 1,2-diacyl-sn-glycero-3-phospho-(1'-sn-glycerol) + CoA. The enzyme catalyses a 1-acyl-sn-glycero-3-phosphocholine + hexadecanoyl-CoA = 1-acyl-2-hexadecanoyl-sn-glycero-3-phosphocholine + CoA. It catalyses the reaction a 1-acyl-sn-glycero-3-phosphate + hexadecanoyl-CoA = 1-acyl-2-hexadecanoyl-sn-glycero-3-phosphate + CoA. The catalysed reaction is 1-acyl-sn-glycero-3-phospho-(1'-sn-glycerol) + hexadecanoyl-CoA = 1-acyl-2-hexadecanoyl-sn-glycero-3-phospho-(1'-sn-glycerol) + CoA. It carries out the reaction 1-hexadecanoyl-sn-glycero-3-phosphocholine + hexadecanoyl-CoA = 1,2-dihexadecanoyl-sn-glycero-3-phosphocholine + CoA. The enzyme catalyses 1-O-hexadecyl-sn-glycero-3-phosphocholine + hexadecanoyl-CoA = 1-O-hexadecyl-2-hexadecanoyl-sn-glycero-3-phosphocholine + CoA. It catalyses the reaction a 1-O-(1Z-alkenyl)-sn-glycero-3-phosphocholine + hexadecanoyl-CoA = 1-O-(1Z)-alkenyl-2-hexadecanoyl-sn-glycero-3-phosphocholine + CoA. The catalysed reaction is 1-hexadecanoyl-sn-glycero-3-phospho-(1'-sn-glycerol) + hexadecanoyl-CoA = 1,2-dihexadecanoyl-sn-glycero-3-phospho-(1'-sn-glycerol) + CoA. It carries out the reaction 1-dodecanoyl-sn-glycero-3-phosphocholine + hexadecanoyl-CoA = 1-dodecanoyl-2-hexadecanoyl-sn-glycero-3-phosphocholine + CoA. The enzyme catalyses 1-tetradecanoyl-sn-glycero-3-phosphocholine + hexadecanoyl-CoA = 1-tetradecanoyl-2-hexadecanoyl-sn-glycero-3-phosphocholine + CoA. It catalyses the reaction 1-O-octadecyl-sn-glycero-3-phosphocholine + hexadecanoyl-CoA = 1-O-octadecyl-2-hexadecanoyl-sn-glycero-3-phosphocholine + CoA. The catalysed reaction is 1-octadecanoyl-sn-glycero-3-phosphocholine + hexadecanoyl-CoA = 1-octadecanoyl-2-hexadecanoyl-sn-glycero-3-phosphocholine + CoA. It carries out the reaction 1-(9Z-octadecenoyl)-sn-glycero-3-phosphocholine + hexadecanoyl-CoA = 1-(9Z-octadecenoyl)-2-hexadecanoyl-sn-glycero-3-phosphocholine + CoA. The enzyme catalyses 1-eicosanoyl-sn-glycero-3-phosphocholine + hexadecanoyl-CoA = 1-eicosanoyl-2-hexadecanoyl-sn-glycero-3-phosphocholine + CoA. It catalyses the reaction hexanoyl-CoA + 1-hexadecanoyl-sn-glycero-3-phosphocholine = 1-hexadecanoyl-2-hexanoyl-sn-glycero-3-phosphocholine + CoA. The catalysed reaction is octanoyl-CoA + 1-hexadecanoyl-sn-glycero-3-phosphocholine = 1-hexadecanoyl-2-octanoyl-sn-glycero-3-phosphocholine + CoA. It carries out the reaction decanoyl-CoA + 1-hexadecanoyl-sn-glycero-3-phosphocholine = 1-hexadecanoyl-2-decanoyl-sn-glycero-3-phosphocholine + CoA. The enzyme catalyses dodecanoyl-CoA + 1-hexadecanoyl-sn-glycero-3-phosphocholine = 1-hexadecanoyl-2-dodecanoyl-sn-glycero-3-phosphocholine + CoA. It catalyses the reaction tetradecanoyl-CoA + 1-hexadecanoyl-sn-glycero-3-phosphocholine = 1-hexadecanoyl-2-tetradecanoyl-sn-glycero-3-phosphocholine + CoA. The catalysed reaction is 1-hexadecanoyl-sn-glycero-3-phosphocholine + (9Z)-octadecenoyl-CoA = 1-hexadecanoyl-2-(9Z-octadecenoyl)-sn-glycero-3-phosphocholine + CoA. It carries out the reaction (9Z,12Z)-octadecadienoyl-CoA + 1-hexadecanoyl-sn-glycero-3-phosphocholine = 1-hexadecanoyl-2-(9Z,12Z-octadecadienoyl)-sn-glycero-3-phosphocholine + CoA. The enzyme catalyses (4Z,7Z,10Z,13Z,16Z,19Z)-docosahexaenoyl-CoA + 1-hexadecanoyl-sn-glycero-3-phosphocholine = 1-hexadecanoyl-2-(4Z,7Z,10Z,13Z,16Z,19Z-docosahexaenoyl)-sn-glycero-3-phosphocholine + CoA. It catalyses the reaction 1-hexadecanoyl-sn-glycero-3-phosphocholine + acetyl-CoA = 1-hexadecanoyl-2-acetyl-sn-glycero-3-phosphocholine + CoA. The catalysed reaction is eicosanoyl-CoA + 1-hexadecanoyl-sn-glycero-3-phosphocholine = 1-hexadecanoyl-2-eicosanoyl-sn-glycero-3-phosphocholine + CoA. It carries out the reaction 1-O-hexadecyl-sn-glycero-3-phosphocholine + acetyl-CoA = 1-O-hexadecyl-2-acetyl-sn-glycero-3-phosphocholine + CoA. It functions in the pathway lipid metabolism; phospholipid metabolism. Its activity is regulated as follows. Activity is stimulated by Mg(2+) or Mn(2+). Functionally, exhibits acyltransferase activity. Exhibits acetyltransferase activity. Activity is calcium-independent. Catalyzes the conversion of lysophosphatidylcholine (1-acyl-sn-glycero-3-phosphocholine or LPC) into phosphatidylcholine (1,2-diacyl-sn-glycero-3-phosphocholine or PC). Catalyzes the conversion 1-acyl-sn-glycerol-3-phosphate (lysophosphatidic acid or LPA) into 1,2-diacyl-sn-glycerol-3-phosphate (phosphatidic acid or PA) by incorporating an acyl moiety at the sn-2 position of the glycerol backbone. Displays a clear preference for saturated fatty acyl-CoAs, and 1-myristoyl or 1-palmitoyl LPC as acyl donors and acceptors, respectively. Involved in platelet-activating factor (PAF) biosynthesis by catalyzing the conversion of the PAF precursor, 1-O-alkyl-sn-glycero-3-phosphocholine (lyso-PAF) into 1-O-alkyl-2-acetyl-sn-glycero-3-phosphocholine (PAF). May synthesize phosphatidylcholine in pulmonary surfactant, thereby playing a pivotal role in respiratory physiology. Involved in the regulation of lipid droplet number and size. The sequence is that of Lysophosphatidylcholine acyltransferase 1 (Lpcat1) from Rattus norvegicus (Rat).